An 84-amino-acid chain; its full sequence is Acyl carrier protein MbtL (84 aa).

One can recognise a Carrier domain in the interval 6-81 (STVSTTLLSI…ELEAAIAAKY (76 aa)). Position 41 is an O-(pantetheine 4'-phosphoryl)serine (S41).

4'-phosphopantetheine is transferred from CoA to a specific serine of apo-ACP, leading to the activated holo-ACP form.

It is found in the cytoplasm. It functions in the pathway siderophore biosynthesis; mycobactin biosynthesis. Acyl carrier protein involved in the formation of acyl-S-ACP intermediates within the mycobactin biosynthesis process. The aliphatic chains carried by ACP are subsequently transferred on to the mycobactin core by MbtK. In Mycobacterium bovis (strain ATCC BAA-935 / AF2122/97), this protein is Acyl carrier protein MbtL (mbtL).